The chain runs to 950 residues: Kinase suppressor of Ras 2 (950 aa).

The tract at residues 239–296 (PPLESGHRSLPPSPRQRHAVRTPPRTPNIVTTVTPPGTPPMRKKNKLKPPGTPPPSSR) is disordered. The segment covering 259–273 (RTPPRTPNIVTTVTP) has biased composition (low complexity). A phosphothreonine mark is found at Thr272 and Thr276. The Phorbol-ester/DAG-type zinc-finger motif lies at 412–456 (KHRFSTKYWMSQTCTVCGKGMLFGLKCKNCKLKCHNKCTKEAPPC). Residues His413, Cys425, Cys428, Cys438, Cys441, His446, Cys449, and Cys456 each coordinate Zn(2+). Ser474 carries the phosphoserine; by MARK3 modification. Thr497 carries the phosphothreonine modification. The segment at 498–556 (LPKTNKINKDHIPVPYQPDSSSNPSSTTSSTPSSPAPPLPPSATPPSPLHPSPQCTRQQ) is disordered. Over residues 517 to 530 (SSSNPSSTTSSTPS) the composition is skewed to low complexity. Over residues 531–548 (SPAPPLPPSATPPSPLHP) the composition is skewed to pro residues. The Protein kinase domain maps to 666–931 (LEIGELIGKG…TKLMDMLEKL (266 aa)). 672–680 (IGKGRFGQV) provides a ligand contact to ATP. The active-site Proton donor/acceptor is the Asp786. Lys788 and Asp803 together coordinate ATP.

Belongs to the protein kinase superfamily. TKL Ser/Thr protein kinase family. As to quaternary structure, heterodimerizes (via N-terminus) with BRAF (via N-terminus) in a MAP2K1/MEK1-dependent manner. Interacts with BRAF; this increases the low intrinsic protein kinase activity of KSR2. Interacts with MAP2K1, forming a heterodimer that can dimerize to form a heterotetramer. Interacts with MAP3K8, MAPK, RAS and RAF. Post-translationally, phosphorylated on Ser-474 by MARK3. Mainly expressed in brain and kidney.

It localises to the cytoplasm. The protein resides in the membrane. The catalysed reaction is L-seryl-[protein] + ATP = O-phospho-L-seryl-[protein] + ADP + H(+). It catalyses the reaction L-threonyl-[protein] + ATP = O-phospho-L-threonyl-[protein] + ADP + H(+). With respect to regulation, kinase activity is inhibited by ASC24. Its function is as follows. Location-regulated scaffold connecting MEK to RAF. Has very low protein kinase activity and can phosphorylate MAP2K1 at several Ser and Thr residues with very low efficiency (in vitro). Acts as MAP2K1/MEK1-dependent allosteric activator of BRAF; upon binding to MAP2K1/MEK1, dimerizes with BRAF and promotes BRAF-mediated phosphorylation of MAP2K1/MEK1. Interaction with BRAF enhances KSR2-mediated phosphorylation of MAP2K1 (in vitro). Blocks MAP3K8 kinase activity and MAP3K8-mediated signaling. Acts as a negative regulator of MAP3K3-mediated activation of ERK, JNK and NF-kappa-B pathways, inhibiting MAP3K3-mediated interleukin-8 production. The polypeptide is Kinase suppressor of Ras 2 (Homo sapiens (Human)).